The chain runs to 931 residues: Dipeptidyl aminopeptidase A (931 aa).

Residues Met1 to Ser13 show a composition bias toward basic residues. Positions Met1 to Glu58 are disordered. Residues Met1 to Ser119 are Cytoplasmic-facing. Residues Asn33–Thr50 show a composition bias toward polar residues. The chain crosses the membrane as a helical; Signal-anchor for type II membrane protein span at residues Tyr120–Pro140. Topologically, residues Ser141–Leu931 are lumenal. Asn377 carries N-linked (GlcNAc...) asparagine glycosylation. Catalysis depends on Ser785, which acts as the Charge relay system. N-linked (GlcNAc...) asparagine glycosylation is present at Asn814. Residues Asp863 and His896 each act as charge relay system in the active site.

Belongs to the peptidase S9B family.

Its subcellular location is the vacuole membrane. Responsible for the proteolytic maturation of the alpha-factor precursor. The protein is Dipeptidyl aminopeptidase A (STE13) of Saccharomyces cerevisiae (strain ATCC 204508 / S288c) (Baker's yeast).